The chain runs to 331 residues: Putative sigma L-dependent transcriptional regulator YplP (331 aa).

The Sigma-54 factor interaction domain maps to histidine 12–alanine 213. Alanine 95–aspartate 104 lines the ATP pocket.

Functionally, may play a role in cold adaptation. This Bacillus subtilis (strain 168) protein is Putative sigma L-dependent transcriptional regulator YplP (yplP).